We begin with the raw amino-acid sequence, 247 residues long: Probable transcriptional regulatory protein Swit_2142 (247 aa).

Over residues 1 to 14 (MAGHSKFKNIMHRK) the composition is skewed to basic residues. The segment at 1 to 21 (MAGHSKFKNIMHRKGAQDKKR) is disordered.

Belongs to the TACO1 family.

The protein resides in the cytoplasm. The polypeptide is Probable transcriptional regulatory protein Swit_2142 (Rhizorhabdus wittichii (strain DSM 6014 / CCUG 31198 / JCM 15750 / NBRC 105917 / EY 4224 / RW1) (Sphingomonas wittichii)).